The following is a 265-amino-acid chain: Histone H1 (265 aa).

The segment covering 1–27 (MATEEPIVAVETVPEPIVTEPTTITEP) has biased composition (low complexity). Disordered stretches follow at residues 1–66 (MATE…PTYE), 131–226 (AAKK…TTPG), and 242–265 (VKSV…GGRK). The span at 29 to 42 (VPEKEEPKAEVEKT) shows a compositional bias: basic and acidic residues. Positions 43 to 55 (KKAKGSKPKKASK) are enriched in basic residues. Residues 61 to 130 (SHPTYEEMIK…KVKGSFKLSA (70 aa)) form the H15 domain. Over residues 140–171 (PKAKTAAKAKSVKAKPAAKPKAKAVVKPKVAS) the composition is skewed to basic residues. Residues 186-202 (KPKTVAAKTKPTAAKPK) are compositionally biased toward low complexity. Positions 203 to 215 (AVVKPKSKVKPAK) are enriched in basic residues. Residues 216 to 226 (VAKTSVKTTPG) show a composition bias toward low complexity.

It belongs to the histone H1/H5 family.

Its subcellular location is the nucleus. It localises to the chromosome. Its function is as follows. Histones H1 are necessary for the condensation of nucleosome chains into higher-order structures. In Pisum sativum (Garden pea), this protein is Histone H1.